The sequence spans 295 residues: Phenylethanolamine N-methyltransferase (295 aa).

The disordered stretch occupies residues 1–26; that stretch reads MNGGSDLKHATGSGSDPKHAAEMDPD. 2 tandem repeats follow at residues 4 to 10 and 14 to 20. Positions 4-20 are 2 X 7 AA repeats of G-S-D-[LP]-K-H-A; the sequence is GSDLKHATGSGSDPKHA. S-adenosyl-L-methionine is bound by residues Tyr-46, Tyr-51, 90-91, Tyr-96, Asp-112, Asn-117, 169-170, and Ala-192; these read GS and DV. Residues Glu-230 and Asp-278 each coordinate octopamine.

It belongs to the class I-like SAM-binding methyltransferase superfamily. NNMT/PNMT/TEMT family. As to expression, brain (pons and medulla oblongata), adrenal gland, retina and heart.

It catalyses the reaction phenylethanolamine + S-adenosyl-L-methionine = N-methylphenylethanolamine + S-adenosyl-L-homocysteine + H(+). It carries out the reaction (R)-noradrenaline + S-adenosyl-L-methionine = (R)-adrenaline + S-adenosyl-L-homocysteine + H(+). The enzyme catalyses (R)-normetanephrine + S-adenosyl-L-methionine = (R)-metanephrine + S-adenosyl-L-homocysteine + H(+). The catalysed reaction is (R)-octopamine + S-adenosyl-L-methionine = (R)-synephrine + S-adenosyl-L-homocysteine + H(+). It participates in catecholamine biosynthesis; (R)-adrenaline biosynthesis; (R)-adrenaline from (R)-noradrenaline: step 1/1. In terms of biological role, catalyzes the transmethylation of nonepinephrine (noradrenaline) to form epinephrine (adrenaline), using S-adenosyl-L-methionine as the methyl donor. Other substrates include phenylethanolamine, octopamine and normetanephrine. The polypeptide is Phenylethanolamine N-methyltransferase (Pnmt) (Mus musculus (Mouse)).